Consider the following 45-residue polypeptide: uncharacterized protein (45 aa).

Positions 1 to 19 (MTFQILFLFVFHFVYIFRA) are cleaved as a signal peptide.

This is an uncharacterized protein from Saccharomyces cerevisiae (strain ATCC 204508 / S288c) (Baker's yeast).